The following is a 225-amino-acid chain: NAD(P)H-quinone oxidoreductase subunit K, chloroplastic (225 aa).

[4Fe-4S] cluster is bound by residues C43, C44, C108, and C139.

The protein belongs to the complex I 20 kDa subunit family. NDH is composed of at least 16 different subunits, 5 of which are encoded in the nucleus. [4Fe-4S] cluster serves as cofactor.

The protein resides in the plastid. It is found in the chloroplast thylakoid membrane. The catalysed reaction is a plastoquinone + NADH + (n+1) H(+)(in) = a plastoquinol + NAD(+) + n H(+)(out). It carries out the reaction a plastoquinone + NADPH + (n+1) H(+)(in) = a plastoquinol + NADP(+) + n H(+)(out). Its function is as follows. NDH shuttles electrons from NAD(P)H:plastoquinone, via FMN and iron-sulfur (Fe-S) centers, to quinones in the photosynthetic chain and possibly in a chloroplast respiratory chain. The immediate electron acceptor for the enzyme in this species is believed to be plastoquinone. Couples the redox reaction to proton translocation, and thus conserves the redox energy in a proton gradient. The polypeptide is NAD(P)H-quinone oxidoreductase subunit K, chloroplastic (Agrostis stolonifera (Creeping bentgrass)).